A 121-amino-acid polypeptide reads, in one-letter code: Small ribosomal subunit protein uS13 (121 aa).

The disordered stretch occupies residues 97–121 (VRGQRTRTNARTRRGARKTVAGKKK). Residues 100-121 (QRTRTNARTRRGARKTVAGKKK) are compositionally biased toward basic residues.

This sequence belongs to the universal ribosomal protein uS13 family. In terms of assembly, part of the 30S ribosomal subunit. Forms a loose heterodimer with protein S19. Forms two bridges to the 50S subunit in the 70S ribosome.

Its function is as follows. Located at the top of the head of the 30S subunit, it contacts several helices of the 16S rRNA. In the 70S ribosome it contacts the 23S rRNA (bridge B1a) and protein L5 of the 50S subunit (bridge B1b), connecting the 2 subunits; these bridges are implicated in subunit movement. Contacts the tRNAs in the A and P-sites. The protein is Small ribosomal subunit protein uS13 of Synechococcus sp. (strain CC9605).